A 274-amino-acid polypeptide reads, in one-letter code: Probable eukaryotic translation initiation factor 3 subunit J (274 aa).

Disordered regions lie at residues 1 to 110 and 207 to 245; these read MDSW…KEAM and KEQQ…NVNS. A compositionally biased stretch (acidic residues) spans 38–47; the sequence is DEEDEDEEEN. Over residues 52–73 the composition is skewed to low complexity; it reads QNDSHSVSQKSSSSSQNDQGSN. The span at 82 to 110 shows a compositional bias: basic and acidic residues; it reads IQERNFEKAIKASEAAAKEESLESSKEAM. Residues 219–234 show a composition bias toward low complexity; the sequence is AAAPAAKPVSTAAPSK.

The protein belongs to the eIF-3 subunit J family. Component of the eukaryotic translation initiation factor 3 (eIF-3) complex. The eIF-3 complex appears to include tif32/eif3a, SPAC25G10.08/eif3b, tif33/eif3c, SPBC4C3.07/eif3f, tif35/eif3g and sum1/eif3i. This set of common subunits may also associate exclusively with either moe1/eif3d and int6/eif3e, or with SPAC821.05/eif3h and SPAC1751.03/eif3m. The eIF-3 complex may also include SPAC3A12.13c/eif3j. Interacts with sad1.

It is found in the cytoplasm. Component of the eukaryotic translation initiation factor 3 (eIF-3) complex, which is involved in protein synthesis of a specialized repertoire of mRNAs and, together with other initiation factors, stimulates binding of mRNA and methionyl-tRNAi to the 40S ribosome. The eIF-3 complex specifically targets and initiates translation of a subset of mRNAs involved in cell proliferation. The polypeptide is Probable eukaryotic translation initiation factor 3 subunit J (Schizosaccharomyces pombe (strain 972 / ATCC 24843) (Fission yeast)).